Here is a 503-residue protein sequence, read N- to C-terminus: Adenosine deaminase 2-A (503 aa).

Residues 1-24 form the signal peptide; sequence MHVLFLGDLMWIYLLLLCCASCNG. Residues His-105 and His-107 each contribute to the Zn(2+) site. Asp-108 contributes to the substrate binding site. The N-linked (GlcNAc...) asparagine glycan is linked to Asn-120. Cys-130 and Cys-152 are disulfide-bonded. N-linked (GlcNAc...) asparagine glycans are attached at residues Asn-167 and Asn-178. Substrate is bound by residues 197–204 and His-286; that span reads WERFEQVF. Asn-290 is a glycosylation site (N-linked (GlcNAc...) asparagine). Substrate is bound at residue Gly-319. His-349 serves as a coordination point for Zn(2+). Residue Glu-352 is the Proton donor of the active site. The N-linked (GlcNAc...) asparagine glycan is linked to Asn-371. The active-site Proton acceptor is His-377. Residue Asp-434 participates in Zn(2+) binding. Asp-435 lines the substrate pocket.

The protein belongs to the metallo-dependent hydrolases superfamily. Adenosine and AMP deaminases family. ADGF subfamily. It depends on Zn(2+) as a cofactor.

It is found in the secreted. It carries out the reaction adenosine + H2O + H(+) = inosine + NH4(+). In terms of biological role, adenosine deaminase that may contribute to the degradation of extracellular adenosine, a signaling molecule that controls a variety of cellular responses. May play a role in the regulation of cell proliferation. In Danio rerio (Zebrafish), this protein is Adenosine deaminase 2-A.